Reading from the N-terminus, the 231-residue chain is Small ribosomal subunit protein uS3 (231 aa).

Positions 39-107 constitute a KH type-2 domain; sequence IRKFIMKTLP…GVSLNIVEIR (69 aa).

This sequence belongs to the universal ribosomal protein uS3 family. Part of the 30S ribosomal subunit. Forms a tight complex with proteins S10 and S14.

In terms of biological role, binds the lower part of the 30S subunit head. Binds mRNA in the 70S ribosome, positioning it for translation. This chain is Small ribosomal subunit protein uS3, found in Zymomonas mobilis subsp. mobilis (strain ATCC 31821 / ZM4 / CP4).